An 82-amino-acid polypeptide reads, in one-letter code: Metallothionein (82 aa).

Residues cysteine 6, cysteine 8, cysteine 11, cysteine 13, cysteine 29, cysteine 33, histidine 37, cysteine 43, cysteine 48, and cysteine 50 each coordinate Cd(2+). The Zn(2+) site is built by cysteine 6, cysteine 8, and cysteine 11. 6 residues coordinate Zn(2+): cysteine 29, cysteine 33, histidine 37, cysteine 43, cysteine 48, and cysteine 50. Positions 61–82 (ITNNQLDEALEETFPASDPISP) are disordered.

This sequence belongs to the metallothionein superfamily.

Its function is as follows. Metallothioneins are small proteins that have a high content of cysteine residues which allow them to bind heavy metal ions through clusters of thiolate bonds. Preferentially, binds four Cd(2+) ions. Also binds three Zn(2+) ions but with less affinity. Required for long-term viability. May play a role in the storage or sequestration of metals when present in excess. The protein is Metallothionein of Pseudomonas fluorescens (strain Q2-87).